The sequence spans 430 residues: Enolase (430 aa).

A (2R)-2-phosphoglycerate-binding site is contributed by glutamine 163. The Proton donor role is filled by glutamate 205. Mg(2+) contacts are provided by aspartate 242, glutamate 288, and aspartate 315. Residues lysine 340, arginine 369, serine 370, and lysine 391 each contribute to the (2R)-2-phosphoglycerate site. Residue lysine 340 is the Proton acceptor of the active site.

Belongs to the enolase family. Requires Mg(2+) as cofactor.

It is found in the cytoplasm. Its subcellular location is the secreted. It localises to the cell surface. It catalyses the reaction (2R)-2-phosphoglycerate = phosphoenolpyruvate + H2O. It participates in carbohydrate degradation; glycolysis; pyruvate from D-glyceraldehyde 3-phosphate: step 4/5. Its function is as follows. Catalyzes the reversible conversion of 2-phosphoglycerate (2-PG) into phosphoenolpyruvate (PEP). It is essential for the degradation of carbohydrates via glycolysis. In Onion yellows phytoplasma (strain OY-M), this protein is Enolase.